The chain runs to 35 residues: Riboflavin-binding protein (35 aa).

An intrachain disulfide couples Cys-5 to Cys-32.

This sequence belongs to the folate receptor family.

In terms of biological role, required for the transport of riboflavin to the developing oocyte. The sequence is that of Riboflavin-binding protein from Struthio camelus (Common ostrich).